A 353-amino-acid polypeptide reads, in one-letter code: Ribosomal RNA small subunit methyltransferase H (353 aa).

Residues 50–52, Asp-69, Phe-96, Asp-117, and Gln-124 contribute to the S-adenosyl-L-methionine site; that span reads GGY. The disordered stretch occupies residues 276-353; it reads AAQASRHVPG…PAPQGRGPRR (78 aa).

The protein belongs to the methyltransferase superfamily. RsmH family.

The protein resides in the cytoplasm. The enzyme catalyses cytidine(1402) in 16S rRNA + S-adenosyl-L-methionine = N(4)-methylcytidine(1402) in 16S rRNA + S-adenosyl-L-homocysteine + H(+). Specifically methylates the N4 position of cytidine in position 1402 (C1402) of 16S rRNA. In Methylorubrum extorquens (strain CM4 / NCIMB 13688) (Methylobacterium extorquens), this protein is Ribosomal RNA small subunit methyltransferase H.